Here is a 185-residue protein sequence, read N- to C-terminus: Ribosome-recycling factor (185 aa).

This sequence belongs to the RRF family.

It localises to the cytoplasm. Its function is as follows. Responsible for the release of ribosomes from messenger RNA at the termination of protein biosynthesis. May increase the efficiency of translation by recycling ribosomes from one round of translation to another. This is Ribosome-recycling factor from Treponema denticola (strain ATCC 35405 / DSM 14222 / CIP 103919 / JCM 8153 / KCTC 15104).